The following is a 207-amino-acid chain: Uracil phosphoribosyltransferase (207 aa).

Residues arginine 77, arginine 102, and aspartate 129–serine 137 each bind 5-phospho-alpha-D-ribose 1-diphosphate. Residues isoleucine 192 and glycine 197 to alanine 199 contribute to the uracil site. Residue aspartate 198 participates in 5-phospho-alpha-D-ribose 1-diphosphate binding.

This sequence belongs to the UPRTase family. Mg(2+) is required as a cofactor.

The enzyme catalyses UMP + diphosphate = 5-phospho-alpha-D-ribose 1-diphosphate + uracil. It participates in pyrimidine metabolism; UMP biosynthesis via salvage pathway; UMP from uracil: step 1/1. Allosterically activated by GTP. Functionally, catalyzes the conversion of uracil and 5-phospho-alpha-D-ribose 1-diphosphate (PRPP) to UMP and diphosphate. The chain is Uracil phosphoribosyltransferase from Mesoplasma florum (strain ATCC 33453 / NBRC 100688 / NCTC 11704 / L1) (Acholeplasma florum).